The primary structure comprises 124 residues: Large ribosomal subunit protein bL21 (124 aa).

The interval 105–124 (NAPSIGPRVRKAKPAAEAAE) is disordered.

Belongs to the bacterial ribosomal protein bL21 family. As to quaternary structure, part of the 50S ribosomal subunit. Contacts protein L20.

Its function is as follows. This protein binds to 23S rRNA in the presence of protein L20. The protein is Large ribosomal subunit protein bL21 of Rhodopseudomonas palustris (strain BisA53).